Consider the following 431-residue polypeptide: Nuclear receptor subfamily 1 group I member 2 (431 aa).

Residues 35-104 (LQICRVCGDK…RLRKCLESGM (70 aa)) constitute a DNA-binding region (nuclear receptor). NR C4-type zinc fingers lie at residues 38 to 58 (CRVC…CEGC) and 74 to 99 (CPFR…LRKC). The Bipartite nuclear localization signal motif lies at 63–89 (RRAMKRNVRLRCPFRKGTCEITRKTRR). Residues 105 to 142 (KKEMIMSDAAVEQRRALIKRKKREKIEAPPPGGQGLTE) are hinge. One can recognise an NR LBD domain in the interval 143–430 (EQQALIQELM…LMQELFSSTD (288 aa)). Hyperforin-binding positions include S244 and 282–285 (ILRF).

Belongs to the nuclear hormone receptor family. NR1 subfamily. In terms of assembly, heterodimer with RXRA. Interacts with NCOA1. Interacts (via domain NR LBD) with CRY1 and CRY2 in a ligand-dependent manner.

It is found in the nucleus. In terms of biological role, nuclear receptor that binds and is activated by a variety of endogenous and xenobiotic compounds. Transcription factor that activates the transcription of multiple genes involved in the metabolism and secretion of potentially harmful xenobiotics, endogenous compounds and drugs. Response to specific ligands is species-specific, due to differences in the ligand-binding domain. Binds to a response element in the promoters of the CYP3A4 and ABCB1/MDR1 genes. Activated by naturally occurring steroids such as pregnenolone and progesterone, the cholesterol metabolite 5-beta-cholestane-3-alpha,7-alpha,12-alpha-triol, synthetic glucocorticoids and antiglucocorticoids and 16-alpha-carbonitrile (PCN). The chain is Nuclear receptor subfamily 1 group I member 2 (Nr1i2) from Mus musculus (Mouse).